The sequence spans 691 residues: MARSPVEPPASQPAKRAAWLRAELERANYAYYVLDQPDLPDAEYDRLFVELQRIEAEHPDLVTPDSPTQRVGGEAASGFTPVVHDKPMLSLNNGFADEDVIAFDKRVADGLDKATDLAGTVTEPVEYACELKFDGLAISLRYENGRFVQASTRGDGTTGEDVTENIRTIRAIPLTLKGKRLPRMLDVRGEVLMFKRDFARLNERQRAAGQREFANPRNAAAGSLRQLDSKITASRPLSFFAYGIGVLDGADMPDTHSGLLDWYETLGLPVNRERAVVRGAAGLLAFFHSVGERRESLPYDIDGVVYKVNRRDEQDRLGFVSRAPRFALAHKFPAQEALTKLIAIDVQVGRTGAITPVARLEPVFVGGATVTNATLHNEDEVRRKDIRIGDTVIVRRAGDVIPEVVSAVLDRRPADAQEFVMPTECPECGSRIERLPDEAIARCTGGLFCPAQRKQALWHFAQRRALDIDGLGEKIIDQLVEQNLVRTPADLFNLGFSTLVALDRFAEKSARNLIDSLEKAKHTTLARFIYALGIRHVGESTAKDLAKHFGSLDPIMDAPIDALLEVNDVGPIVAESIHQFFAEEHNRTVIEQLRARGKVTWPEGPPAPRAPQGVLAGKTVVLTGTLPTLTREAAKEMLEAAGAKVAGSVSKKTDYVVAGADAGSKLAKAEELGIPVLDEAGMHTLLEGHAR.

NAD(+) is bound by residues 41-45, 90-91, and Glu130; these read DAEYD and SL. Lys132 functions as the N6-AMP-lysine intermediate in the catalytic mechanism. NAD(+) contacts are provided by Arg153, Glu190, Lys307, and Lys331. Residues Cys425, Cys428, Cys443, and Cys449 each contribute to the Zn(2+) site. A BRCT domain is found at 610 to 691; it reads APQGVLAGKT…MHTLLEGHAR (82 aa).

The protein belongs to the NAD-dependent DNA ligase family. LigA subfamily. It depends on Mg(2+) as a cofactor. Mn(2+) serves as cofactor.

The catalysed reaction is NAD(+) + (deoxyribonucleotide)n-3'-hydroxyl + 5'-phospho-(deoxyribonucleotide)m = (deoxyribonucleotide)n+m + AMP + beta-nicotinamide D-nucleotide.. In terms of biological role, DNA ligase that catalyzes the formation of phosphodiester linkages between 5'-phosphoryl and 3'-hydroxyl groups in double-stranded DNA using NAD as a coenzyme and as the energy source for the reaction. It is essential for DNA replication and repair of damaged DNA. This chain is DNA ligase, found in Burkholderia pseudomallei (strain 668).